Here is a 417-residue protein sequence, read N- to C-terminus: D-glycerate 2-kinase (417 aa).

This sequence belongs to the glycerate kinase type-1 family. As to quaternary structure, homodimer. Mg(2+) is required as a cofactor.

It carries out the reaction (R)-glycerate + ATP = (2R)-2-phosphoglycerate + ADP + H(+). Its function is as follows. Involved in the degradation of serine via 3-hydroxypyruvate. Catalyzes the ATP-dependent phosphorylation of D-glycerate to 2-phosphoglycerate. This chain is D-glycerate 2-kinase, found in Thermotoga maritima (strain ATCC 43589 / DSM 3109 / JCM 10099 / NBRC 100826 / MSB8).